The sequence spans 210 residues: MAQESQHGSKTLYVHPFDNETIWEGHSTIVDEIIEQLKENDISLPRVKALVCSVGGGGLFSGIIKGLDRNQLAEKIPVVAVETAGCDVLNKSLKKGSPVTLEKLTSVATSLASPYIASFAFESFNKYGCKSVVLSDQDVLATCLRYADDYNFIVEPACGASLHLCYHPEILEDILEQKIYEDDIVIIIACGGSCMTYEDLVKASSTLNVS.

It belongs to the serine/threonine dehydratase family. Pyridoxal 5'-phosphate is required as a cofactor.

It is found in the cytoplasm. It carries out the reaction L-serine = pyruvate + NH4(+). The protein operates within carbohydrate biosynthesis; gluconeogenesis. The sequence is that of Putative truncated L-serine dehydratase SDL1 (SDL1) from Saccharomyces cerevisiae (strain ATCC 204508 / S288c) (Baker's yeast).